Here is a 302-residue protein sequence, read N- to C-terminus: NAD kinase 2 (302 aa).

Asp78 acts as the Proton acceptor in catalysis. NAD(+) is bound by residues 78–79, 152–153, Asp182, 193–198, and Ala217; these read DG, NE, and TAYALS.

It belongs to the NAD kinase family. A divalent metal cation serves as cofactor.

Its subcellular location is the cytoplasm. It catalyses the reaction NAD(+) + ATP = ADP + NADP(+) + H(+). In terms of biological role, involved in the regulation of the intracellular balance of NAD and NADP, and is a key enzyme in the biosynthesis of NADP. Catalyzes specifically the phosphorylation on 2'-hydroxyl of the adenosine moiety of NAD to yield NADP. The sequence is that of NAD kinase 2 from Parasynechococcus marenigrum (strain WH8102).